Reading from the N-terminus, the 200-residue chain is ATP-dependent Clp protease proteolytic subunit (200 aa).

The Nucleophile role is filled by serine 99. Histidine 124 is a catalytic residue.

It belongs to the peptidase S14 family. As to quaternary structure, fourteen ClpP subunits assemble into 2 heptameric rings which stack back to back to give a disk-like structure with a central cavity, resembling the structure of eukaryotic proteasomes.

It localises to the cytoplasm. The enzyme catalyses Hydrolysis of proteins to small peptides in the presence of ATP and magnesium. alpha-casein is the usual test substrate. In the absence of ATP, only oligopeptides shorter than five residues are hydrolyzed (such as succinyl-Leu-Tyr-|-NHMec, and Leu-Tyr-Leu-|-Tyr-Trp, in which cleavage of the -Tyr-|-Leu- and -Tyr-|-Trp bonds also occurs).. In terms of biological role, cleaves peptides in various proteins in a process that requires ATP hydrolysis. Has a chymotrypsin-like activity. Plays a major role in the degradation of misfolded proteins. The protein is ATP-dependent Clp protease proteolytic subunit of Syntrophomonas wolfei subsp. wolfei (strain DSM 2245B / Goettingen).